Reading from the N-terminus, the 479-residue chain is ESX-1 secretion system ATPase EccB1 (479 aa).

Over 1–44 (MAGFRLTTKVQVSGWRFLLRRVEHAIVRRDTRMFDDPLQFYSRA) the chain is Cytoplasmic. A helical transmembrane segment spans residues 45–65 (VFAGVVVSVLICLGAALMAYF). Topologically, residues 66–479 (KPLGKQGSDQ…NPRKVASGEG (414 aa)) are periplasmic. C152 and C347 are disulfide-bonded.

Belongs to the EccB family. As to quaternary structure, part of the ESX-1 / type VII secretion system (T7SS), which is composed of cytosolic and membrane components. The ESX-1 membrane complex is composed of EccB1, EccCa1, EccCb1, EccD1 and EccE1.

It localises to the cell inner membrane. Its function is as follows. An ATPase. Part of the ESX-1 / type VII specialized secretion system (T7SS), which exports several proteins including EsxA and EsxB. Plays a role in DNA conjugation, in both donor and recipient strains. The chain is ESX-1 secretion system ATPase EccB1 from Mycolicibacterium smegmatis (strain MKD8) (Mycobacterium smegmatis).